The sequence spans 418 residues: Nisin biosynthesis protein NisC (418 aa).

To B.subtilis SpaC and S.epidermidis EpiC.

Functionally, could be implicated in the processing or the export process of the nisin lantibiotic. This is Nisin biosynthesis protein NisC (nisC) from Lactococcus lactis subsp. lactis (Streptococcus lactis).